Consider the following 364-residue polypeptide: Dual-specificity RNA methyltransferase RlmN (364 aa).

Glu93 serves as the catalytic Proton acceptor. One can recognise a Radical SAM core domain in the interval 99 to 337; the sequence is EDDRGTLCIS…ATIRKTRGDD (239 aa). A disulfide bond links Cys106 and Cys342. [4Fe-4S] cluster is bound by residues Cys113, Cys117, and Cys120. Residues 167 to 168, Ser199, 221 to 223, and Asn299 contribute to the S-adenosyl-L-methionine site; these read GE and SLH. Cys342 serves as the catalytic S-methylcysteine intermediate.

The protein belongs to the radical SAM superfamily. RlmN family. The cofactor is [4Fe-4S] cluster.

Its subcellular location is the cytoplasm. The enzyme catalyses adenosine(2503) in 23S rRNA + 2 reduced [2Fe-2S]-[ferredoxin] + 2 S-adenosyl-L-methionine = 2-methyladenosine(2503) in 23S rRNA + 5'-deoxyadenosine + L-methionine + 2 oxidized [2Fe-2S]-[ferredoxin] + S-adenosyl-L-homocysteine. It catalyses the reaction adenosine(37) in tRNA + 2 reduced [2Fe-2S]-[ferredoxin] + 2 S-adenosyl-L-methionine = 2-methyladenosine(37) in tRNA + 5'-deoxyadenosine + L-methionine + 2 oxidized [2Fe-2S]-[ferredoxin] + S-adenosyl-L-homocysteine. Functionally, specifically methylates position 2 of adenine 2503 in 23S rRNA and position 2 of adenine 37 in tRNAs. m2A2503 modification seems to play a crucial role in the proofreading step occurring at the peptidyl transferase center and thus would serve to optimize ribosomal fidelity. This Dichelobacter nodosus (strain VCS1703A) protein is Dual-specificity RNA methyltransferase RlmN.